A 187-amino-acid chain; its full sequence is Pyridoxal 5'-phosphate synthase subunit PdxT (187 aa).

L-glutamine is bound at residue 47-49 (GES). Cys-76 acts as the Nucleophile in catalysis. L-glutamine contacts are provided by residues Arg-102 and 128–129 (IR). Catalysis depends on charge relay system residues His-165 and Glu-167.

This sequence belongs to the glutaminase PdxT/SNO family. In the presence of PdxS, forms a dodecamer of heterodimers. Only shows activity in the heterodimer.

The enzyme catalyses aldehydo-D-ribose 5-phosphate + D-glyceraldehyde 3-phosphate + L-glutamine = pyridoxal 5'-phosphate + L-glutamate + phosphate + 3 H2O + H(+). It carries out the reaction L-glutamine + H2O = L-glutamate + NH4(+). It participates in cofactor biosynthesis; pyridoxal 5'-phosphate biosynthesis. Functionally, catalyzes the hydrolysis of glutamine to glutamate and ammonia as part of the biosynthesis of pyridoxal 5'-phosphate. The resulting ammonia molecule is channeled to the active site of PdxS. The protein is Pyridoxal 5'-phosphate synthase subunit PdxT of Methanococcus vannielii (strain ATCC 35089 / DSM 1224 / JCM 13029 / OCM 148 / SB).